We begin with the raw amino-acid sequence, 1147 residues long: Putative ATP-dependent RNA helicase L377 (1147 aa).

One can recognise a Helicase ATP-binding domain in the interval 108 to 315 (INPNTPYRGL…VELINYLRPK (208 aa)). 121–128 (WGTGVGKS) is an ATP binding site. Residues 264 to 267 (DEAH) carry the DEAH box motif.

This sequence belongs to the DEAD box helicase family. DEAH subfamily.

It localises to the virion. It catalyses the reaction ATP + H2O = ADP + phosphate + H(+). The polypeptide is Putative ATP-dependent RNA helicase L377 (Acanthamoeba polyphaga (Amoeba)).